A 256-amino-acid polypeptide reads, in one-letter code: uncharacterized protein (256 aa).

The signal sequence occupies residues 1 to 22; sequence MGYLKRFALYISVMILIFAIAG. A lipid anchor (N-palmitoyl cysteine) is attached at C23. The S-diacylglycerol cysteine moiety is linked to residue C23.

It belongs to the staphylococcal tandem lipoprotein family.

It is found in the cell membrane. This is an uncharacterized protein from Staphylococcus aureus (strain COL).